The sequence spans 264 residues: DNA-binding HTH-type transcriptional repressor TrmBL2 (264 aa).

A coiled-coil region spans residues 81–113 (LEKFIEEWQERVKEELEAKKKAKEELIELMKPL).

Belongs to the transcriptional regulator TrmB family.

Its subcellular location is the cytoplasm. The protein resides in the chromosome. Functionally, an abundant chromosomal protein that seems to be involved in both genome architecture and transcription repression. Incubation with DNA in vitro gives fibrous structures 14.2 +/- 2.1 nm in thickness (naked DNA is 1.83 +/- 0.37 nm); does not significantly compact DNA. Binds to both coding and non-coding regions; binding within gene promoters correlates with decreased transcript levels, while binding within coding regions does not. The chain is DNA-binding HTH-type transcriptional repressor TrmBL2 from Thermococcus kodakarensis (strain ATCC BAA-918 / JCM 12380 / KOD1) (Pyrococcus kodakaraensis (strain KOD1)).